A 224-amino-acid polypeptide reads, in one-letter code: Ribosomal RNA small subunit methyltransferase G (224 aa).

Residues Gly89, Phe94, 140-141, and Arg153 contribute to the S-adenosyl-L-methionine site; that span reads AE.

This sequence belongs to the methyltransferase superfamily. RNA methyltransferase RsmG family.

Its subcellular location is the cytoplasm. In terms of biological role, specifically methylates the N7 position of a guanine in 16S rRNA. In Bacteroides fragilis (strain YCH46), this protein is Ribosomal RNA small subunit methyltransferase G.